A 186-amino-acid chain; its full sequence is Threonylcarbamoyl-AMP synthase (186 aa).

In terms of domain architecture, YrdC-like spans 3–186 (ELTLDSAVAT…DALSGNVLRS (184 aa)).

The protein belongs to the SUA5 family. TsaC subfamily.

The protein resides in the cytoplasm. It carries out the reaction L-threonine + hydrogencarbonate + ATP = L-threonylcarbamoyladenylate + diphosphate + H2O. Its function is as follows. Required for the formation of a threonylcarbamoyl group on adenosine at position 37 (t(6)A37) in tRNAs that read codons beginning with adenine. Catalyzes the conversion of L-threonine, HCO(3)(-)/CO(2) and ATP to give threonylcarbamoyl-AMP (TC-AMP) as the acyladenylate intermediate, with the release of diphosphate. The sequence is that of Threonylcarbamoyl-AMP synthase from Stenotrophomonas maltophilia (strain K279a).